A 208-amino-acid chain; its full sequence is Small ribosomal subunit protein eS8 (208 aa).

Residues 1–33 are disordered; it reads MGISRDHWHKRRATGGKRKPIRKKRKFELGRPA. Over residues 7–26 the composition is skewed to basic residues; sequence HWHKRRATGGKRKPIRKKRK.

It belongs to the eukaryotic ribosomal protein eS8 family.

The sequence is that of Small ribosomal subunit protein eS8 (RpS8) from Apis mellifera (Honeybee).